Consider the following 419-residue polypeptide: Transcription termination factor Rho (419 aa).

The 76-residue stretch at 48–123 (GFTCSGTLEI…VRLDSINGDH (76 aa)) folds into the Rho RNA-BD domain. Residues 169-174 (GKGQRA), 181-186 (KIGKTV), and arginine 212 each bind ATP.

The protein belongs to the Rho family. Homohexamer. The homohexamer assembles into an open ring structure.

Facilitates transcription termination by a mechanism that involves Rho binding to the nascent RNA, activation of Rho's RNA-dependent ATPase activity, and release of the mRNA from the DNA template. The polypeptide is Transcription termination factor Rho (Neisseria gonorrhoeae).